Consider the following 212-residue polypeptide: Uridine kinase (212 aa).

An ATP-binding site is contributed by 13 to 20 (GGSGSGKT).

Belongs to the uridine kinase family.

The protein resides in the cytoplasm. The enzyme catalyses uridine + ATP = UMP + ADP + H(+). It catalyses the reaction cytidine + ATP = CMP + ADP + H(+). It functions in the pathway pyrimidine metabolism; CTP biosynthesis via salvage pathway; CTP from cytidine: step 1/3. It participates in pyrimidine metabolism; UMP biosynthesis via salvage pathway; UMP from uridine: step 1/1. The polypeptide is Uridine kinase (Bacillus cereus (strain B4264)).